Consider the following 133-residue polypeptide: Helix-loop-helix protein 1 (133 aa).

The segment at 1–79 (MMLNSDTMEL…RRATAKYRTA (79 aa)) is disordered. The segment covering 25–45 (DCGGGAGPDGAGPGGPGGGQA) has biased composition (gly residues). The segment covering 52–65 (EPGRKDLQHLSREE) has biased composition (basic and acidic residues). Residues 66 to 79 (RRRRRRATAKYRTA) are compositionally biased toward basic residues. In terms of domain architecture, bHLH spans 75–127 (KYRTAHATRERIRVEAFNLAFAELRKLLPTLPPDKKLSKIEILRLAICYISYL).

In terms of assembly, efficient DNA binding requires dimerization with another bHLH protein.

It localises to the nucleus. In terms of biological role, may serve as DNA-binding protein and may be involved in the control of cell-type determination, possibly within the developing nervous system. This is Helix-loop-helix protein 1 (NHLH1) from Homo sapiens (Human).